The primary structure comprises 529 residues: Nuclear protein localization protein 4 homolog 1 (529 aa).

Residues 129-266 (IQIENQELVN…ITEYSMDRHY (138 aa)) enclose the MPN domain. The RanBP2-type zinc-finger motif lies at 499-529 (SGGAVWNCGHCTFQNEAARQDCSMCGLPAAD).

The protein belongs to the NPL4 family. As to quaternary structure, forms a complex composed of ubxn-3, ufd-1, npl-4.1 and cdc-48.1; within the complex, interacts with ufd-1 and ubxn-3. Interacts with ufd-1. Interacts with elc-1/elongin C; the interaction may mediate the interaction between the npl-4-ufd-1-cdc-48 complex and the E3 ubiquitin ligase cul-2 complex.

It localises to the cytoplasm. The protein resides in the nucleus. Its function is as follows. In association with ufd-1 and ATPase cdc-48.1 and/or cdc-48.2, involved in the cytoplasmic elimination of misfolded proteins exported from the ER. This pathway, known as ERAD, prevents the activation of the unfolded protein response (UPR) caused by the accumulation of misfolded proteins in the ER. During S phase and in association with ufd-1, cdc-48.1 and/or cdc-48.2 and ubxn-3, ensures the degradation of DNA licensing factor cdt-1 after the initiation of DNA replication and thus the disassembly of the DNA replication CGM helicase complex by promoting the dissociation from chromatin of several of its components including cdc-45 and sld-5. Regulates ubxn-3 nuclear localization during S phase. The protein is Nuclear protein localization protein 4 homolog 1 of Caenorhabditis elegans.